Here is a 313-residue protein sequence, read N- to C-terminus: tRNA pseudouridine synthase B (313 aa).

Catalysis depends on Asp-46, which acts as the Nucleophile.

It belongs to the pseudouridine synthase TruB family. Type 1 subfamily.

It carries out the reaction uridine(55) in tRNA = pseudouridine(55) in tRNA. Responsible for synthesis of pseudouridine from uracil-55 in the psi GC loop of transfer RNAs. The chain is tRNA pseudouridine synthase B from Nitrosospira multiformis (strain ATCC 25196 / NCIMB 11849 / C 71).